A 321-amino-acid chain; its full sequence is Protein ABIL3 (321 aa).

Disordered regions lie at residues 179-273 and 279-298; these read TIRE…RSAS and EKEA…SKRL. Low complexity-rich tracts occupy residues 204 to 215 and 240 to 255; these read SATFSFSSIATA and IRPS…SKSR. Residues 279-288 are compositionally biased toward basic and acidic residues; that stretch reads EKEAQKEPEH.

Belongs to the ABI family. In terms of assembly, binds SCAR.

It localises to the cytoplasm. The protein resides in the cytoskeleton. In terms of biological role, involved in regulation of actin and microtubule organization. Part of a WAVE complex that activates the Arp2/3 complex. The protein is Protein ABIL3 (ABIL3) of Arabidopsis thaliana (Mouse-ear cress).